Consider the following 225-residue polypeptide: Uracil-DNA glycosylase (225 aa).

Asp-64 acts as the Proton acceptor in catalysis.

The protein belongs to the uracil-DNA glycosylase (UDG) superfamily. UNG family.

Its subcellular location is the cytoplasm. The enzyme catalyses Hydrolyzes single-stranded DNA or mismatched double-stranded DNA and polynucleotides, releasing free uracil.. In terms of biological role, excises uracil residues from the DNA which can arise as a result of misincorporation of dUMP residues by DNA polymerase or due to deamination of cytosine. The chain is Uracil-DNA glycosylase from Lachnoclostridium phytofermentans (strain ATCC 700394 / DSM 18823 / ISDg) (Clostridium phytofermentans).